The chain runs to 230 residues: Orotidine 5'-phosphate decarboxylase (230 aa).

Residues aspartate 11, lysine 34, 61-70, threonine 117, arginine 179, glutamine 188, glycine 208, and arginine 209 contribute to the substrate site; that span reads DLKLHDIPNT. Lysine 63 functions as the Proton donor in the catalytic mechanism.

This sequence belongs to the OMP decarboxylase family. Type 1 subfamily. In terms of assembly, homodimer.

The catalysed reaction is orotidine 5'-phosphate + H(+) = UMP + CO2. Its pathway is pyrimidine metabolism; UMP biosynthesis via de novo pathway; UMP from orotate: step 2/2. Catalyzes the decarboxylation of orotidine 5'-monophosphate (OMP) to uridine 5'-monophosphate (UMP). In Streptococcus pyogenes serotype M6 (strain ATCC BAA-946 / MGAS10394), this protein is Orotidine 5'-phosphate decarboxylase.